A 79-amino-acid polypeptide reads, in one-letter code: Quinohemoprotein amine dehydrogenase subunit gamma (79 aa).

Residues 7-16 (CTATTDPGWE) constitute a cross-link (4-cysteinyl-glutamic acid (Cys-Glu)). 2 cross-links (3-cysteinyl-aspartic acid (Cys-Asp)) span residues 27–33 (CQPMEAD) and 41–49 (CWWPAQVPD). Residue Asp33 is the Proton acceptor of the active site. The segment at residues 37–43 (CSDPCWW) is a cross-link (4'-cysteinyl-tryptophylquinone (Cys-Trp)). At Trp43 the chain carries Tryptophylquinone.

The protein belongs to the quinohemoprotein amine dehydrogenase subunit gamma family. In terms of assembly, heterotrimer of an alpha, a beta and a gamma subunit. Cysteine tryptophylquinone residue serves as cofactor. Post-translationally, the cysteine tryptophylquinone (CTQ) is generated by oxidation of the indole ring of a tryptophan residue to form tryptophylquinone, followed by covalent cross-linking with a cysteine residue.

Its subcellular location is the periplasm. The catalysed reaction is an aliphatic amine + A + H2O = an aldehyde + AH2 + NH4(+). Catalyzes the oxidative deamination of a wide range of aliphatic monoamines and diamines. The physiological electron acceptor is an azurin-like blue protein. The sequence is that of Quinohemoprotein amine dehydrogenase subunit gamma (qhnDH) from Pseudomonas putida (strain ATCC 47054 / DSM 6125 / CFBP 8728 / NCIMB 11950 / KT2440).